The primary structure comprises 151 residues: Metallothiol transferase FosB (151 aa).

The VOC domain maps to 4–119; sequence SINHVTYSVS…DGHKFELHTG (116 aa). Mg(2+) is bound by residues histidine 7, histidine 66, and glutamate 115. Catalysis depends on glutamate 115, which acts as the Proton donor/acceptor.

It belongs to the fosfomycin resistance protein family. FosB subfamily. In terms of assembly, homodimer. The cofactor is Mg(2+).

It is found in the cytoplasm. Its function is as follows. Metallothiol transferase which confers resistance to fosfomycin by catalyzing the addition of a thiol cofactor to fosfomycin. L-cysteine is probably the physiological thiol donor. This Staphylococcus saprophyticus subsp. saprophyticus (strain ATCC 15305 / DSM 20229 / NCIMB 8711 / NCTC 7292 / S-41) protein is Metallothiol transferase FosB.